Reading from the N-terminus, the 234-residue chain is Large ribosomal subunit protein eL6 (234 aa).

Belongs to the eukaryotic ribosomal protein eL6 family.

The polypeptide is Large ribosomal subunit protein eL6 (RPL6) (Mesembryanthemum crystallinum (Common ice plant)).